A 784-amino-acid polypeptide reads, in one-letter code: ATP-dependent 6-phosphofructokinase, platelet type (784 aa).

Methionine 1 carries the N-acetylmethionine modification. Positions 1–399 (MDADDSRAPK…NLNTYKRLAI (399 aa)) are N-terminal catalytic PFK domain 1. Serine 6, serine 12, and serine 21 each carry phosphoserine. ATP contacts are provided by residues glycine 34, 97–98 (RC), and 127–130 (GDGS). Aspartate 128 lines the Mg(2+) pocket. Serine 142 carries the phosphoserine modification. Substrate contacts are provided by residues 173–175 (SID), arginine 210, 217–219 (MGR), glutamate 273, arginine 301, and 307–310 (HVQR). The active-site Proton acceptor is the aspartate 175. Serine 386 carries the post-translational modification Phosphoserine. Residue lysine 395 is modified to N6-acetyllysine. Residues 400-411 (KLPDDQIPKTNC) are interdomain linker. A C-terminal regulatory PFK domain 2 region spans residues 412-784 (NVAVINVGAP…QLEHVQPWSV (373 aa)). Arginine 481 contacts beta-D-fructose 2,6-bisphosphate. Lysine 486 is modified (N6-acetyllysine). Beta-D-fructose 2,6-bisphosphate is bound by residues 538–542 (TVSNN), arginine 576, 583–585 (MGG), and glutamate 639. Serine 540 carries O-linked (GlcNAc) serine glycosylation. At tyrosine 651 the chain carries Phosphotyrosine. Beta-D-fructose 2,6-bisphosphate contacts are provided by residues arginine 665 and 671–674 (HMQQ). An N6-acetyllysine modification is found at lysine 688. Arginine 744 is a beta-D-fructose 2,6-bisphosphate binding site. Serine 783 carries the phosphoserine modification.

The protein belongs to the phosphofructokinase type A (PFKA) family. ATP-dependent PFK group I subfamily. Eukaryotic two domain clade 'E' sub-subfamily. In terms of assembly, homo- and heterotetramers. Phosphofructokinase (PFK) enzyme functions as a tetramer composed of different combinations of 3 types of subunits, called PFKM (M), PFKL (L) and PFKP (P). The composition of the PFK tetramer differs according to the tissue type it is present in. The kinetic and regulatory properties of the tetrameric enzyme are dependent on the subunit composition, hence can vary across tissues. Interacts with ATG4B; promoting phosphorylation of ATG4B. It depends on Mg(2+) as a cofactor. Post-translationally, glcNAcylation decreases enzyme activity. In terms of processing, phosphorylation at Ser-386 promotes interaction with ATG4B.

It localises to the cytoplasm. The catalysed reaction is beta-D-fructose 6-phosphate + ATP = beta-D-fructose 1,6-bisphosphate + ADP + H(+). The protein operates within carbohydrate degradation; glycolysis; D-glyceraldehyde 3-phosphate and glycerone phosphate from D-glucose: step 3/4. Its activity is regulated as follows. Allosterically activated by ADP, AMP, or fructose 2,6-bisphosphate, and allosterically inhibited by ATP or citrate. Functionally, catalyzes the phosphorylation of D-fructose 6-phosphate to fructose 1,6-bisphosphate by ATP, the first committing step of glycolysis. The chain is ATP-dependent 6-phosphofructokinase, platelet type (PFKP) from Pongo abelii (Sumatran orangutan).